Consider the following 286-residue polypeptide: Release factor glutamine methyltransferase (286 aa).

S-adenosyl-L-methionine-binding residues include Asp-148 and Asn-194. Residue 194–197 (NPPY) participates in substrate binding.

Belongs to the protein N5-glutamine methyltransferase family. PrmC subfamily.

It carries out the reaction L-glutaminyl-[peptide chain release factor] + S-adenosyl-L-methionine = N(5)-methyl-L-glutaminyl-[peptide chain release factor] + S-adenosyl-L-homocysteine + H(+). Methylates the class 1 translation termination release factors RF1/PrfA and RF2/PrfB on the glutamine residue of the universally conserved GGQ motif. This is Release factor glutamine methyltransferase from Leptospira interrogans serogroup Icterohaemorrhagiae serovar Lai (strain 56601).